Here is a 55-residue protein sequence, read N- to C-terminus: ATP synthase F(0) complex subunit 8 (55 aa).

A helical transmembrane segment spans residues 7-24 (SPWFFIMLTTWLTFSLII).

This sequence belongs to the ATPase protein 8 family. As to quaternary structure, component of the ATP synthase complex composed at least of ATP5F1A/subunit alpha, ATP5F1B/subunit beta, ATP5MC1/subunit c (homooctomer), MT-ATP6/subunit a, MT-ATP8/subunit 8, ATP5ME/subunit e, ATP5MF/subunit f, ATP5MG/subunit g, ATP5MK/subunit k, ATP5MJ/subunit j, ATP5F1C/subunit gamma, ATP5F1D/subunit delta, ATP5F1E/subunit epsilon, ATP5PF/subunit F6, ATP5PB/subunit b, ATP5PD/subunit d, ATP5PO/subunit OSCP. ATP synthase complex consists of a soluble F(1) head domain (subunits alpha(3) and beta(3)) - the catalytic core - and a membrane F(0) domain - the membrane proton channel (subunits c, a, 8, e, f, g, k and j). These two domains are linked by a central stalk (subunits gamma, delta, and epsilon) rotating inside the F1 region and a stationary peripheral stalk (subunits F6, b, d, and OSCP).

The protein localises to the mitochondrion membrane. Its function is as follows. Subunit 8, of the mitochondrial membrane ATP synthase complex (F(1)F(0) ATP synthase or Complex V) that produces ATP from ADP in the presence of a proton gradient across the membrane which is generated by electron transport complexes of the respiratory chain. ATP synthase complex consist of a soluble F(1) head domain - the catalytic core - and a membrane F(1) domain - the membrane proton channel. These two domains are linked by a central stalk rotating inside the F(1) region and a stationary peripheral stalk. During catalysis, ATP synthesis in the catalytic domain of F(1) is coupled via a rotary mechanism of the central stalk subunits to proton translocation. In vivo, can only synthesize ATP although its ATP hydrolase activity can be activated artificially in vitro. Part of the complex F(0) domain. This is ATP synthase F(0) complex subunit 8 from Columbina passerina (Common ground-dove).